We begin with the raw amino-acid sequence, 265 residues long: Seminal vesicle secretory protein 3A (265 aa).

Positions 1–20 (MKSIFFSLSLLLLLEKKAAG) are cleaved as a signal peptide. 5 consecutive repeat copies span residues 116–119 (QIKS), 122–125 (QVKS), 129–132 (QLKS), 136–139 (QLKT), and 142–145 (QVKS). Positions 116-145 (QIKSQTQVKSYAAQLKSQPGQLKTIGQVKS) are 5 X 4 AA tandem repeats of Q-X-K-[ST].

In terms of processing, glycosylated. Post-translationally, covalently cross-linked by transglutaminase, which is important for the formation of the gelatinous copulatory plug. Five repeats of Q-X-K-(S/T) in the central region of the protein serve as the transglutaminase substrate site(s). Highly expressed in the seminal vesicle where it is detected in luminal epithelium of the mucosa folds, and also in luminal fluid (at protein level). Not detected in other tissues tested.

It is found in the secreted. Functionally, component of the copulatory plug. The protein is Seminal vesicle secretory protein 3A of Mus musculus (Mouse).